Reading from the N-terminus, the 441-residue chain is Homoserine dehydrogenase (441 aa).

Asn17 and Val18 together coordinate NADP(+). Positions 18, 37, and 47 each coordinate NAD(+). Val18 is an NADPH binding site. NADP(+) is bound by residues Arg49, Arg50, and Lys107. Arg49 contributes to the NADPH binding site. Lys107 contacts NADPH. Glu131, Val134, Gly136, and Ile138 together coordinate Na(+). Residues Gly189 and Glu192 each contribute to the NADP(+) site. Residues Glu192 and Asp203 each contribute to the L-homoserine site. Residue Lys207 is the Proton donor of the active site. Residue Gly309 participates in NADP(+) binding. Gly309 lines the NAD(+) pocket. An NADPH-binding site is contributed by Gly309. The ACT domain maps to 356–435 (YVSMNVADKP…VVQGVSSVIR (80 aa)).

This sequence belongs to the homoserine dehydrogenase family. A metal cation is required as a cofactor.

The enzyme catalyses L-homoserine + NADP(+) = L-aspartate 4-semialdehyde + NADPH + H(+). The catalysed reaction is L-homoserine + NAD(+) = L-aspartate 4-semialdehyde + NADH + H(+). The protein operates within amino-acid biosynthesis; L-methionine biosynthesis via de novo pathway; L-homoserine from L-aspartate: step 3/3. It participates in amino-acid biosynthesis; L-threonine biosynthesis; L-threonine from L-aspartate: step 3/5. Its function is as follows. Catalyzes the conversion of L-aspartate-beta-semialdehyde (L-Asa) to L-homoserine (L-Hse), the third step in the biosynthesis of threonine and methionine from aspartate. This is Homoserine dehydrogenase (hom) from Mycobacterium tuberculosis (strain CDC 1551 / Oshkosh).